A 302-amino-acid polypeptide reads, in one-letter code: Ornithine carbamoyltransferase (302 aa).

Carbamoyl phosphate contacts are provided by residues Ser52–Thr55, Gln79, Arg103, and His130–Gln133. Residues Asn161, Asp221, and Ser225–Met226 each bind L-ornithine. Residues Cys261–Leu262 and Arg289 each bind carbamoyl phosphate.

The protein belongs to the aspartate/ornithine carbamoyltransferase superfamily. OTCase family.

It is found in the cytoplasm. The enzyme catalyses carbamoyl phosphate + L-ornithine = L-citrulline + phosphate + H(+). It functions in the pathway amino-acid biosynthesis; L-arginine biosynthesis; L-arginine from L-ornithine and carbamoyl phosphate: step 1/3. Reversibly catalyzes the transfer of the carbamoyl group from carbamoyl phosphate (CP) to the N(epsilon) atom of ornithine (ORN) to produce L-citrulline. The sequence is that of Ornithine carbamoyltransferase from Syntrophotalea carbinolica (strain DSM 2380 / NBRC 103641 / GraBd1) (Pelobacter carbinolicus).